The chain runs to 390 residues: 3,5-dihydroxybiphenyl synthase (390 aa).

Residue Cys161 is part of the active site.

This sequence belongs to the thiolase-like superfamily. Chalcone/stilbene synthases family. Homodimer.

The catalysed reaction is benzoyl-CoA + 3 malonyl-CoA + 3 H(+) = biphenyl-3,5-diol + 4 CO2 + 4 CoA. In terms of biological role, type III polyketide synthase involved in the biosynthesis of the phytoalexins bisphenyls and dibenzofurans. Can also use salicoyl-CoA and malonyl-CoA to produce a diketide intermediate yielding 4-hydroxycoumarin after cyclization and enolization. Can also use m-hydroxybenzoyl-CoA as substrate, producing m-hydroxybenzoyl diacetic acid lactone as a derailment product. No activity with p-hydroxybenzoyl-CoA, CoA-linked cinnamic acids or acetyl-CoA. This chain is 3,5-dihydroxybiphenyl synthase (BIS1), found in Sorbus aucuparia (European mountain ash).